Consider the following 603-residue polypeptide: Elongation factor 4 (603 aa).

The region spanning 6–188 (SKIRNFCIIA…QIVKKIPAPT (183 aa)) is the tr-type G domain. GTP is bound by residues 18 to 23 (DHGKST) and 135 to 138 (NKVD).

The protein belongs to the TRAFAC class translation factor GTPase superfamily. Classic translation factor GTPase family. LepA subfamily.

It localises to the cell membrane. The enzyme catalyses GTP + H2O = GDP + phosphate + H(+). Required for accurate and efficient protein synthesis under certain stress conditions. May act as a fidelity factor of the translation reaction, by catalyzing a one-codon backward translocation of tRNAs on improperly translocated ribosomes. Back-translocation proceeds from a post-translocation (POST) complex to a pre-translocation (PRE) complex, thus giving elongation factor G a second chance to translocate the tRNAs correctly. Binds to ribosomes in a GTP-dependent manner. This chain is Elongation factor 4, found in Agathobacter rectalis (strain ATCC 33656 / DSM 3377 / JCM 17463 / KCTC 5835 / VPI 0990) (Eubacterium rectale).